Here is a 757-residue protein sequence, read N- to C-terminus: Catalase-peroxidase (757 aa).

Positions 101-248 (WHSAGTYRIG…LAAVQMGLIY (148 aa)) form a cross-link, tryptophyl-tyrosyl-methioninium (Trp-Tyr) (with M-274). His102 acts as the Proton acceptor in catalysis. The disordered stretch occupies residues 210–231 (SEGVHHPDEHSGAKEKASKNSD). Basic and acidic residues predominate over residues 212-231 (GVHHPDEHSGAKEKASKNSD). Positions 248–274 (YVNPEGPDGRPDPLASARDIRETFARM) form a cross-link, tryptophyl-tyrosyl-methioninium (Tyr-Met) (with W-101). His289 contributes to the heme b binding site. Residues 293–312 (KTHGAAPADNVGPEPEAGEL) are disordered.

It belongs to the peroxidase family. Peroxidase/catalase subfamily. As to quaternary structure, homodimer or homotetramer. Heme b is required as a cofactor. In terms of processing, formation of the three residue Trp-Tyr-Met cross-link is important for the catalase, but not the peroxidase activity of the enzyme.

The catalysed reaction is H2O2 + AH2 = A + 2 H2O. It catalyses the reaction 2 H2O2 = O2 + 2 H2O. Its function is as follows. Bifunctional enzyme with both catalase and broad-spectrum peroxidase activity. The polypeptide is Catalase-peroxidase (Xylella fastidiosa (strain M12)).